A 449-amino-acid chain; its full sequence is 3-phosphoshikimate 1-carboxyvinyltransferase (449 aa).

The interval Met1–Gly26 is disordered. Positions 28, 29, and 33 each coordinate 3-phosphoshikimate. Lys28 provides a ligand contact to phosphoenolpyruvate. Positions 100 and 128 each coordinate phosphoenolpyruvate. The 3-phosphoshikimate site is built by Ser174, Gln176, Asp327, and Lys354. Gln176 contacts phosphoenolpyruvate. Asp327 serves as the catalytic Proton acceptor. 2 residues coordinate phosphoenolpyruvate: Arg358 and Arg403.

The protein belongs to the EPSP synthase family. In terms of assembly, monomer.

It is found in the cytoplasm. The catalysed reaction is 3-phosphoshikimate + phosphoenolpyruvate = 5-O-(1-carboxyvinyl)-3-phosphoshikimate + phosphate. It functions in the pathway metabolic intermediate biosynthesis; chorismate biosynthesis; chorismate from D-erythrose 4-phosphate and phosphoenolpyruvate: step 6/7. Functionally, catalyzes the transfer of the enolpyruvyl moiety of phosphoenolpyruvate (PEP) to the 5-hydroxyl of shikimate-3-phosphate (S3P) to produce enolpyruvyl shikimate-3-phosphate and inorganic phosphate. This Chelativorans sp. (strain BNC1) protein is 3-phosphoshikimate 1-carboxyvinyltransferase.